A 257-amino-acid polypeptide reads, in one-letter code: Imidazole glycerol phosphate synthase subunit HisF (257 aa).

Catalysis depends on residues Asp-12 and Asp-131.

This sequence belongs to the HisA/HisF family. In terms of assembly, heterodimer of HisH and HisF.

The protein resides in the cytoplasm. It catalyses the reaction 5-[(5-phospho-1-deoxy-D-ribulos-1-ylimino)methylamino]-1-(5-phospho-beta-D-ribosyl)imidazole-4-carboxamide + L-glutamine = D-erythro-1-(imidazol-4-yl)glycerol 3-phosphate + 5-amino-1-(5-phospho-beta-D-ribosyl)imidazole-4-carboxamide + L-glutamate + H(+). Its pathway is amino-acid biosynthesis; L-histidine biosynthesis; L-histidine from 5-phospho-alpha-D-ribose 1-diphosphate: step 5/9. Functionally, IGPS catalyzes the conversion of PRFAR and glutamine to IGP, AICAR and glutamate. The HisF subunit catalyzes the cyclization activity that produces IGP and AICAR from PRFAR using the ammonia provided by the HisH subunit. This is Imidazole glycerol phosphate synthase subunit HisF from Paraburkholderia xenovorans (strain LB400).